The following is a 68-amino-acid chain: Protein SlyX homolog (68 aa).

Belongs to the SlyX family.

This is Protein SlyX homolog from Pseudomonas fluorescens (strain SBW25).